The following is a 393-amino-acid chain: Prokineticin receptor 1 (393 aa).

At 1 to 62 the chain is on the extracellular side; that stretch reads METTVGTLGE…TNSRTFFAAK (62 aa). A glycan (N-linked (GlcNAc...) asparagine) is linked at asparagine 11. A helical membrane pass occupies residues 63-83; it reads IVIGMALVGIMLVCGIGNFIF. The Cytoplasmic segment spans residues 84 to 98; sequence ITALARYKKLRNLTN. The chain crosses the membrane as a helical span at residues 99–119; it reads LLIANLAISDFLVAIVCCPFE. At 120–145 the chain is on the extracellular side; it reads MDYYVVRQLSWEHGHVLCASVNYLRT. Residues cysteine 137 and cysteine 217 are joined by a disulfide bond. A helical transmembrane segment spans residues 146 to 166; sequence VSLYVSTNALLAIAIDRYLAI. Residues 167–179 lie on the Cytoplasmic side of the membrane; it reads VHPLRPRMKCQTA. Residues 180–200 traverse the membrane as a helical segment; that stretch reads AGLIFLVWSVSILIAIPAAYF. The Extracellular segment spans residues 201-232; that stretch reads TTETVLVIVESQEKIFCGQIWPVDQQFYYRSY. The chain crosses the membrane as a helical span at residues 233–253; it reads FLLVFGLEFVGPVIAMTLCYA. Over 254–282 the chain is Cytoplasmic; it reads RVSRELWFKAVPGFQTEQIRRRLRCRRRT. Residues 283–303 traverse the membrane as a helical segment; it reads VLGLVCVLSAYVLCWAPFYGF. Residues 304 to 322 lie on the Extracellular side of the membrane; the sequence is TIVRDFFPSVFVKEKHYLT. A helical membrane pass occupies residues 323-343; that stretch reads AFYVVECIAMSNSMINTLCFV. At 344 to 393 the chain is on the cytoplasmic side; it reads TVRNNTSKYLKRILRLQWRASPSGSKASADLDLRTTGIPATEEVDCIRLK.

The protein belongs to the G-protein coupled receptor 1 family. As to expression, widely expressed in peripheral tissues with the highest level in the spleen and moderate levels in the adipose tissues, thymus, lung, kidney, testis, uterus and small intestine.

The protein resides in the cell membrane. Receptor for prokineticin 1. Exclusively coupled to the G(q) subclass of heteromeric G proteins. Activation leads to mobilization of calcium, stimulation of phosphoinositide turnover and activation of p44/p42 mitogen-activated protein kinase. May play a role during early pregnancy. The polypeptide is Prokineticin receptor 1 (Prokr1) (Rattus norvegicus (Rat)).